A 90-amino-acid chain; its full sequence is Barrier-to-autointegration factor-like protein (90 aa).

As to quaternary structure, homodimer. Heterodimerizes with BANF1.

Its subcellular location is the nucleus. The protein resides in the cytoplasm. In terms of biological role, may play a role in BANF1 regulation and influence tissue-specific roles of BANF1. The sequence is that of Barrier-to-autointegration factor-like protein (Banf2) from Mus musculus (Mouse).